Reading from the N-terminus, the 146-residue chain is Large ribosomal subunit protein uL15 (146 aa).

A compositionally biased stretch (basic and acidic residues) spans 1-13 (MKLHELKPSEGSR). Positions 1-54 (MKLHELKPSEGSRKVRNRVGRGIGSGNGKTAGKGHKGQNARSGGGVRPGFEGGQ) are disordered. Composition is skewed to gly residues over residues 21–31 (RGIGSGNGKTA) and 42–52 (SGGGVRPGFEG).

The protein belongs to the universal ribosomal protein uL15 family. Part of the 50S ribosomal subunit.

Functionally, binds to the 23S rRNA. This chain is Large ribosomal subunit protein uL15, found in Bacillus velezensis (strain DSM 23117 / BGSC 10A6 / LMG 26770 / FZB42) (Bacillus amyloliquefaciens subsp. plantarum).